The sequence spans 453 residues: Gamma-aminobutyric acid receptor subunit alpha-6 (453 aa).

An N-terminal signal peptide occupies residues 1-19; that stretch reads MASSLPWLCIILWLENALG. The Extracellular segment spans residues 20-243; that stretch reads KLEVEGNFYS…FHLQRKMGYF (224 aa). A glycan (N-linked (GlcNAc...) asparagine) is linked at asparagine 31. Position 84 (arginine 84) interacts with 4-aminobutanoate. Residues asparagine 128 and asparagine 141 are each glycosylated (N-linked (GlcNAc...) asparagine). Residue threonine 147 coordinates 4-aminobutanoate. Cysteine 156 and cysteine 170 are disulfide-bonded. A helical transmembrane segment spans residues 244–264; the sequence is MIQIYTPCIMTVILSQVSFWI. Residues 265–270 are Cytoplasmic-facing; it reads NKESVP. A helical membrane pass occupies residues 271-290; the sequence is ARTVFGITTVLTMTTLSISA. The Extracellular segment spans residues 291–304; it reads RHSLPKVSYATAMD. The chain crosses the membrane as a helical span at residues 305-325; sequence WFIAVCFAFVFSALIEFAAVN. The Cytoplasmic segment spans residues 326–422; sequence YFTNLQTQKA…GTSKIDQYSR (97 aa). Threonine 403 is modified (phosphothreonine). A helical transmembrane segment spans residues 423-443; the sequence is ILFPVAFAGFNLVYWVVYLSK. Topologically, residues 444–453 are extracellular; that stretch reads DTMEVSSSVE.

Belongs to the ligand-gated ion channel (TC 1.A.9) family. Gamma-aminobutyric acid receptor (TC 1.A.9.5) subfamily. GABRA6 sub-subfamily. As to quaternary structure, heteropentamer, formed by a combination of alpha (GABRA1-6), beta (GABRB1-3), gamma (GABRG1-3), delta (GABRD), epsilon (GABRE), rho (GABRR1-3), pi (GABRP) and theta (GABRQ) chains, each subunit exhibiting distinct physiological and pharmacological properties. Binds UBQLN1. As to expression, expressed in brain, in cerebellar granule cells.

The protein resides in the postsynaptic cell membrane. It is found in the cell membrane. The enzyme catalyses chloride(in) = chloride(out). Functionally, alpha subunit of the heteropentameric ligand-gated chloride channel gated by gamma-aminobutyric acid (GABA), a major inhibitory neurotransmitter in the brain. GABA-gated chloride channels, also named GABA(A) receptors (GABAAR), consist of five subunits arranged around a central pore and contain GABA active binding site(s) located at the alpha and beta subunit interface(s). When activated by GABA, GABAARs selectively allow the flow of chloride anions across the cell membrane down their electrochemical gradient. Alpha-6/GABRA6 subunits are found at both synaptic and extrasynaptic sites. Chloride influx into the postsynaptic neuron following GABAAR opening decreases the neuron ability to generate a new action potential, thereby reducing nerve transmission. Extrasynaptic alpha-6-containing receptors contribute to the tonic GABAergic inhibition. Alpha-6 subunits are also present on glutamatergic synapses. In Homo sapiens (Human), this protein is Gamma-aminobutyric acid receptor subunit alpha-6.